Consider the following 685-residue polypeptide: DNA topoisomerase 4 subunit B (685 aa).

The segment covering 389–400 has biased composition (basic and acidic residues); sequence EAARKAREESRN. Residues 389-427 form a disordered region; the sequence is EAARKAREESRNGKKRKKGESLLSGKLTPAQSRNPKKNE. The Toprim domain maps to 426-540; it reads NELYLVEGDS…AGKVYIALPP (115 aa). Residues Glu432, Asp505, and Asp507 each coordinate Mg(2+). Composition is skewed to acidic residues over residues 644-654 and 673-685; these read GSILDRSEEDT and QTDD…FDIE. Residues 644–685 are disordered; that stretch reads GSILDRSEEDTSAPTGESLLDAEKTKEAEQTDDTEISLFDIE.

Belongs to the type II topoisomerase family. ParE type 1 subfamily. Heterotetramer composed of ParC and ParE. Mg(2+) is required as a cofactor. Mn(2+) serves as cofactor. The cofactor is Ca(2+).

The enzyme catalyses ATP-dependent breakage, passage and rejoining of double-stranded DNA.. Its activity is regulated as follows. Pyrrolopyrimidines inhibit both GyrB and its paralog in topoisomerase IV (parE). Topoisomerase IV is essential for chromosome segregation. It relaxes supercoiled DNA. Performs the decatenation events required during the replication of a circular DNA molecule. In Enterococcus faecalis (strain ATCC 700802 / V583), this protein is DNA topoisomerase 4 subunit B.